A 189-amino-acid polypeptide reads, in one-letter code: Elongation factor P (189 aa).

Lys-34 bears the N6-(3,6-diaminohexanoyl)-5-hydroxylysine mark.

This sequence belongs to the elongation factor P family. In terms of processing, may be beta-lysylated on the epsilon-amino group of Lys-34 by the combined action of EpmA and EpmB, and then hydroxylated on the C5 position of the same residue by EpmC (if this protein is present). Lysylation is critical for the stimulatory effect of EF-P on peptide-bond formation. The lysylation moiety may extend toward the peptidyltransferase center and stabilize the terminal 3-CCA end of the tRNA. Hydroxylation of the C5 position on Lys-34 may allow additional potential stabilizing hydrogen-bond interactions with the P-tRNA.

Its subcellular location is the cytoplasm. It functions in the pathway protein biosynthesis; polypeptide chain elongation. In terms of biological role, involved in peptide bond synthesis. Alleviates ribosome stalling that occurs when 3 or more consecutive Pro residues or the sequence PPG is present in a protein, possibly by augmenting the peptidyl transferase activity of the ribosome. Modification of Lys-34 is required for alleviation. The sequence is that of Elongation factor P from Buchnera aphidicola subsp. Acyrthosiphon pisum (strain APS) (Acyrthosiphon pisum symbiotic bacterium).